Reading from the N-terminus, the 419-residue chain is L-rhamnose isomerase (419 aa).

Positions 262, 294, and 296 each coordinate Mn(2+).

Belongs to the rhamnose isomerase family. In terms of assembly, homotetramer. It depends on Mn(2+) as a cofactor.

The protein resides in the cytoplasm. It catalyses the reaction L-rhamnopyranose = L-rhamnulose. It functions in the pathway carbohydrate degradation; L-rhamnose degradation; glycerone phosphate from L-rhamnose: step 1/3. In terms of biological role, catalyzes the interconversion of L-rhamnose and L-rhamnulose. This Shigella boydii serotype 4 (strain Sb227) protein is L-rhamnose isomerase.